Consider the following 141-residue polypeptide: Hemoglobin subunit alpha-2 (141 aa).

Residues 1-141 form the Globin domain; that stretch reads VLTDAERKEV…VATVLTSKYR (141 aa). Residue H58 participates in O2 binding. H87 contributes to the heme b binding site.

It belongs to the globin family. Heterotetramer of two alpha chains and two beta chains. As to expression, red blood cells.

Involved in oxygen transport from the lung to the various peripheral tissues. This Tachyglossus aculeatus aculeatus (Southeast Australian short-beaked echidna) protein is Hemoglobin subunit alpha-2.